We begin with the raw amino-acid sequence, 781 residues long: Catalase-peroxidase (781 aa).

The N-terminal stretch at 1-20 (MLYIYYLFKSLFFHTLFVFS) is a signal peptide. A cross-link (tryptophyl-tyrosyl-methioninium (Trp-Tyr) (with M-298)) is located at residues 125 to 272 (WHSAGTYRIG…LAAVQMGLIY (148 aa)). Residue histidine 126 is the Proton acceptor of the active site. Positions 237–256 (VHHPDEHRGAKEKAAKNSDS) are disordered. Positions 272 to 298 (YVNPEGPDGRPDPLASARDIRETFARM) form a cross-link, tryptophyl-tyrosyl-methioninium (Tyr-Met) (with W-125). Histidine 313 is a heme b binding site. The disordered stretch occupies residues 317–336 (KTHGAAPADNVGPEPEAGEL).

This sequence belongs to the peroxidase family. Peroxidase/catalase subfamily. As to quaternary structure, homodimer or homotetramer. Heme b is required as a cofactor. Formation of the three residue Trp-Tyr-Met cross-link is important for the catalase, but not the peroxidase activity of the enzyme.

It carries out the reaction H2O2 + AH2 = A + 2 H2O. It catalyses the reaction 2 H2O2 = O2 + 2 H2O. In terms of biological role, bifunctional enzyme with both catalase and broad-spectrum peroxidase activity. This is Catalase-peroxidase from Xylella fastidiosa (strain 9a5c).